The sequence spans 243 residues: MTVAADALSAPLRAGAEALGLDLSEAHLGQLLEFLALLQKWNQVYNLTAVRDPQEMLTHHLLDSLAAVAPLQRHLRGMQDLPGSAGDGAKLRLLDVGSGGGLPGVVFAICCPALDVSCVDTVAKKAAFIQQAAVSLRLRNLRGIHARVENLAGPFDVVSCRAFASLPDFVAWSQAAIAANGVWLAMKGRDPSDEITGLPPIAEVFHVEQLAVPGLDAERCIVWMRPRKGAEAGADGVGGPALP.

Residues G97, L102, 148-149 (VE), and R161 each bind S-adenosyl-L-methionine.

Belongs to the methyltransferase superfamily. RNA methyltransferase RsmG family.

The protein localises to the cytoplasm. The catalysed reaction is guanosine(527) in 16S rRNA + S-adenosyl-L-methionine = N(7)-methylguanosine(527) in 16S rRNA + S-adenosyl-L-homocysteine. In terms of biological role, specifically methylates the N7 position of guanine in position 527 of 16S rRNA. The sequence is that of Ribosomal RNA small subunit methyltransferase G from Paracidovorax citrulli (strain AAC00-1) (Acidovorax citrulli).